The following is a 572-amino-acid chain: Urease subunit alpha (572 aa).

Residues 136 to 572 (GGIDTHIHFI…VPLGQRYFLF (437 aa)) enclose the Urease domain. Residues histidine 141, histidine 143, and lysine 224 each contribute to the Ni(2+) site. Lysine 224 bears the N6-carboxylysine mark. Histidine 226 provides a ligand contact to substrate. Ni(2+) is bound by residues histidine 253 and histidine 279. Histidine 327 functions as the Proton donor in the catalytic mechanism. Position 367 (aspartate 367) interacts with Ni(2+).

It belongs to the metallo-dependent hydrolases superfamily. Urease alpha subunit family. Heterotrimer of UreA (gamma), UreB (beta) and UreC (alpha) subunits. Three heterotrimers associate to form the active enzyme. The cofactor is Ni cation. Carboxylation allows a single lysine to coordinate two nickel ions.

Its subcellular location is the cytoplasm. It catalyses the reaction urea + 2 H2O + H(+) = hydrogencarbonate + 2 NH4(+). It functions in the pathway nitrogen metabolism; urea degradation; CO(2) and NH(3) from urea (urease route): step 1/1. This chain is Urease subunit alpha, found in Haemophilus influenzae (strain 86-028NP).